Consider the following 253-residue polypeptide: U1 small nuclear ribonucleoprotein A (253 aa).

The RRM 1 domain maps to 23 to 102 (VTIYINNLNE…KPMRIQYAKT (80 aa)). Residues 111 to 140 (DGTFVPRERRKRNDEKPEKKQKREQHHDVS) are disordered. The 75-residue stretch at 179–253 (NILFVQNLPH…NQMLISYAKK (75 aa)) folds into the RRM 2 domain.

It belongs to the RRM U1 A/B'' family. In terms of assembly, component of the spliceosome where it is associated with snRNP U1.

It is found in the nucleus. Its subcellular location is the nucleolus. Involved in nuclear pre-mRNA splicing. The polypeptide is U1 small nuclear ribonucleoprotein A (Oryza sativa subsp. indica (Rice)).